The primary structure comprises 142 residues: Hemoglobin subunit alpha-4 (142 aa).

Positions 2 to 142 (VLSAADKSNV…VSTVLTSKYR (141 aa)) constitute a Globin domain. An O2-binding site is contributed by histidine 59. Position 88 (histidine 88) interacts with heme b.

The protein belongs to the globin family. Heterotetramer of two alpha chains and two beta chains. In terms of tissue distribution, red blood cells.

In terms of biological role, involved in oxygen transport from the lung to the various peripheral tissues. This chain is Hemoglobin subunit alpha-4, found in Bubalus bubalis (Domestic water buffalo).